We begin with the raw amino-acid sequence, 322 residues long: Daunorubicin resistance ATP-binding protein DrrA2 (322 aa).

The region spanning 6 to 236 (VRAEAMEKRY…VGGDRIEVVV (231 aa)) is the ABC transporter domain. 38 to 45 (GPNGAGKT) contributes to the ATP binding site.

The protein belongs to the ABC transporter superfamily. Drug exporter-1 (DrugE1) (TC 3.A.1.105) family. In terms of assembly, the complex is probably composed of two ATP-binding proteins (DrrA2) and two transmembrane proteins (DrrB2).

The protein localises to the cell membrane. The enzyme catalyses daunorubicin(in) + ATP + H2O = daunorubicin(out) + ADP + phosphate + H(+). Its function is as follows. Part of the ABC transporter complex DrrA2B2 involved in daunorubicin efflux. Responsible for energy coupling to the transport system. Confers self-resistance to daunorubicin, an antibiotic produced by S.coeruleorubidus. This Streptomyces coeruleorubidus protein is Daunorubicin resistance ATP-binding protein DrrA2.